Here is a 546-residue protein sequence, read N- to C-terminus: Chromosomal replication initiator protein DnaA (546 aa).

The tract at residues 1–85 is domain I, interacts with DnaA modulators; sequence MSDPQAALRA…TRALSQHMGR (85 aa). Positions 85–204 are domain II; that stretch reads RPCSLAVTIA…EPAHNPNREK (120 aa). Residues 96–111 show a composition bias toward pro residues; it reads PPQPAPQEEPPAPAPQ. Residues 96–209 are disordered; the sequence is PPQPAPQEEP…PNREKSLNPK (114 aa). Residues 126–145 are compositionally biased toward low complexity; the sequence is QTQAFQQPTQSTQPAPASQP. The span at 191-209 shows a compositional bias: basic and acidic residues; the sequence is IPREEPAHNPNREKSLNPK. The segment at 205–421 is domain III, AAA+ region; the sequence is SLNPKHTFEN…GALIRVSAYS (217 aa). ATP-binding residues include Gly-249, Gly-251, Lys-252, and Thr-253. Residues 422–546 are domain IV, binds dsDNA; the sequence is SLVNEPISLE…TQRVKNHNQR (125 aa).

The protein belongs to the DnaA family. As to quaternary structure, oligomerizes as a right-handed, spiral filament on DNA at oriC.

The protein resides in the cytoplasm. In terms of biological role, plays an essential role in the initiation and regulation of chromosomal replication. ATP-DnaA binds to the origin of replication (oriC) to initiate formation of the DNA replication initiation complex once per cell cycle. Binds the DnaA box (a 9 base pair repeat at the origin) and separates the double-stranded (ds)DNA. Forms a right-handed helical filament on oriC DNA; dsDNA binds to the exterior of the filament while single-stranded (ss)DNA is stabiized in the filament's interior. The ATP-DnaA-oriC complex binds and stabilizes one strand of the AT-rich DNA unwinding element (DUE), permitting loading of DNA polymerase. After initiation quickly degrades to an ADP-DnaA complex that is not apt for DNA replication. Binds acidic phospholipids. The polypeptide is Chromosomal replication initiator protein DnaA (Corynebacterium aurimucosum (strain ATCC 700975 / DSM 44827 / CIP 107346 / CN-1) (Corynebacterium nigricans)).